The sequence spans 314 residues: tRNA pseudouridine synthase B (314 aa).

Histidine 43 is a binding site for substrate. The Nucleophile role is filled by aspartate 48. Residues tyrosine 76, tyrosine 179, and leucine 200 each coordinate substrate.

It belongs to the pseudouridine synthase TruB family. Type 1 subfamily.

It catalyses the reaction uridine(55) in tRNA = pseudouridine(55) in tRNA. In terms of biological role, responsible for synthesis of pseudouridine from uracil-55 in the psi GC loop of transfer RNAs. The protein is tRNA pseudouridine synthase B of Pectobacterium atrosepticum (strain SCRI 1043 / ATCC BAA-672) (Erwinia carotovora subsp. atroseptica).